The sequence spans 189 residues: Ornithine decarboxylase antizyme 2 (189 aa).

Phosphoserine is present on serine 186.

This sequence belongs to the ODC antizyme family. As to quaternary structure, interacts with ODC1 and thereby sterically blocks ODC homodimerization. Interacts with AZIN2; this interaction disrupts the interaction between the antizyme and ODC1.

The protein resides in the nucleus. Ornithine decarboxylase (ODC) antizyme protein that negatively regulates ODC activity and intracellular polyamine biosynthesis and uptake in response to increased intracellular polyamine levels. Binds to ODC monomers, inhibiting the assembly of the functional ODC homodimers. Does not target the ODC monomers for degradation, which allows a protein synthesis-independent restoration of ODC activity. Involved in the translocation of AZIN2 from ER-Golgi intermediate compartment (ERGIC) to the cytosol. This Mus musculus (Mouse) protein is Ornithine decarboxylase antizyme 2 (Oaz2).